Consider the following 330-residue polypeptide: Delta-aminolevulinic acid dehydratase (330 aa).

Lys203 acts as the Schiff-base intermediate with substrate in catalysis. 5-aminolevulinate-binding residues include Arg213 and Arg224. Glu240 is a Mg(2+) binding site. Catalysis depends on Lys255, which acts as the Schiff-base intermediate with substrate. 5-aminolevulinate is bound by residues Ser281 and Tyr320.

This sequence belongs to the ALAD family. In terms of assembly, homooctamer.

The catalysed reaction is 2 5-aminolevulinate = porphobilinogen + 2 H2O + H(+). It participates in porphyrin-containing compound metabolism; protoporphyrin-IX biosynthesis; coproporphyrinogen-III from 5-aminolevulinate: step 1/4. Catalyzes an early step in the biosynthesis of tetrapyrroles. Binds two molecules of 5-aminolevulinate per subunit, each at a distinct site, and catalyzes their condensation to form porphobilinogen. The protein is Delta-aminolevulinic acid dehydratase (hemB) of Streptomyces coelicolor (strain ATCC BAA-471 / A3(2) / M145).